Here is a 233-residue protein sequence, read N- to C-terminus: uncharacterized protein (233 aa).

Belongs to the RHS family.

This is an uncharacterized protein from Escherichia coli (strain K12).